An 83-amino-acid chain; its full sequence is uncharacterized protein (83 aa).

It belongs to the chlamydial CPn_0710/CT_666/TC_0037 family.

This is an uncharacterized protein from Chlamydia trachomatis serovar D (strain ATCC VR-885 / DSM 19411 / UW-3/Cx).